The sequence spans 775 residues: Semaphorin-3E (775 aa).

Residues 1–25 form the signal peptide; sequence MASAGHIITLLLWGYLLELWTGGHT. Positions 32–516 constitute a Sema domain; that stretch reads RLRLSHKELL…SASAVAQVRF (485 aa). N-linked (GlcNAc...) asparagine glycosylation occurs at N44. C105 and C115 form a disulfide bridge. Residue N126 is glycosylated (N-linked (GlcNAc...) asparagine). Disulfide bonds link C133–C142, C270–C382, C294–C342, and C519–C537. N-linked (GlcNAc...) asparagine glycosylation is present at N330. The region spanning 581-669 is the Ig-like C2-type domain; the sequence is ALDKTEEHLA…SFVHTVRKIT (89 aa). N-linked (GlcNAc...) asparagine glycans are attached at residues N595 and N596. C654 and C729 are joined by a disulfide. The segment at 742–775 is disordered; it reads LKMSPSKWKYANPQEKKLRSKPEHYRLPRHTLDS. Residues 755–775 are compositionally biased toward basic and acidic residues; sequence QEKKLRSKPEHYRLPRHTLDS.

The protein belongs to the semaphorin family. In terms of assembly, interacts with PLXND1.

The protein localises to the secreted. Its function is as follows. Plays an important role in signaling via the cell surface receptor PLXND1. Mediates reorganization of the actin cytoskeleton, leading to the retraction of cell projections. Promotes focal adhesion disassembly and inhibits adhesion of endothelial cells to the extracellular matrix. Regulates angiogenesis, both during embryogenesis and after birth. Can down-regulate sprouting angiogenesis. Required for normal vascular patterning during embryogenesis. Plays an important role in ensuring the specificity of synapse formation. This Homo sapiens (Human) protein is Semaphorin-3E (SEMA3E).